The following is a 422-amino-acid chain: Glutamate-1-semialdehyde 2,1-aminomutase (422 aa).

The residue at position 264 (Lys264) is an N6-(pyridoxal phosphate)lysine.

Belongs to the class-III pyridoxal-phosphate-dependent aminotransferase family. HemL subfamily. As to quaternary structure, homodimer. Pyridoxal 5'-phosphate serves as cofactor.

The protein localises to the cytoplasm. The enzyme catalyses (S)-4-amino-5-oxopentanoate = 5-aminolevulinate. It functions in the pathway porphyrin-containing compound metabolism; protoporphyrin-IX biosynthesis; 5-aminolevulinate from L-glutamyl-tRNA(Glu): step 2/2. This Clostridium kluyveri (strain ATCC 8527 / DSM 555 / NBRC 12016 / NCIMB 10680 / K1) protein is Glutamate-1-semialdehyde 2,1-aminomutase.